A 326-amino-acid chain; its full sequence is tRNA uridine(34) hydroxylase (326 aa).

Residues 123–217 (SDPDVILVDT…YLEEVKQEES (95 aa)) enclose the Rhodanese domain. Residue C177 is the Cysteine persulfide intermediate of the active site.

The protein belongs to the TrhO family.

The enzyme catalyses uridine(34) in tRNA + AH2 + O2 = 5-hydroxyuridine(34) in tRNA + A + H2O. Functionally, catalyzes oxygen-dependent 5-hydroxyuridine (ho5U) modification at position 34 in tRNAs. This chain is tRNA uridine(34) hydroxylase, found in Shewanella denitrificans (strain OS217 / ATCC BAA-1090 / DSM 15013).